Here is a 588-residue protein sequence, read N- to C-terminus: Adenine deaminase (588 aa).

The protein belongs to the metallo-dependent hydrolases superfamily. Adenine deaminase family. As to quaternary structure, homodimer. The cofactor is Mn(2+).

It catalyses the reaction adenine + H2O + H(+) = hypoxanthine + NH4(+). The polypeptide is Adenine deaminase (Escherichia coli O9:H4 (strain HS)).